A 390-amino-acid chain; its full sequence is MAANYKSCPLKKRPIVFVEERLPQTEALALTKDSQFAQDQPQDLSLKRGRDEETQDYQQPEPKRDYVLNLSKTPERNSSSSSNSCLLSPPVEAQDYLPTEIHMRGLTAGTTGYTTATPTTINPFQSAFVMAAGCNPISALWSSYQPHLAAFPSPASSMASPQSVYSYQQMTPPSSPGSDLETGSEPEDLSVRNDIPLPALFHLFDEAKSSSSGASVSSSSGYSYTPAMSASSASVAANHAKNYRFKCDECQKMYSTSMGLSKHRQFHCPAAECNQEKKTHSCEECGKLYTTIGALKMHIRTHTLPCKCPICGKAFSRPWLLQGHIRTHTGEKPFQCPDCPRSFADRSNLRAHQQTHVDVKKYACQVCHKSFSRMSLLNKHSSSNCTITIA.

Residues 1–20 form an SNAG domain region; it reads MAANYKSCPLKKRPIVFVEE. 2 disordered regions span residues 29-65 and 162-191; these read ALTK…PKRD and QSVY…DLSV. 2 stretches are compositionally biased toward polar residues: residues 32 to 43 and 162 to 172; these read KDSQFAQDQPQD and QSVYSYQQMTP. 5 C2H2-type zinc fingers span residues 245–267, 280–302, 306–328, 334–356, and 362–385; these read FKCD…RQFH, HSCE…IRTH, CKCP…IRTH, FQCP…QQTH, and YACQ…SSNC.

The protein belongs to the snail C2H2-type zinc-finger protein family.

It localises to the nucleus. In terms of biological role, essential for the correct specification of ventral-dorsal patterns. This Drosophila melanogaster (Fruit fly) protein is Protein snail (sna).